The chain runs to 280 residues: 1-cyclohexenylcarbonyl-CoA reductase (280 aa).

Residues 22 to 25 (SRGI), 71 to 72 (DV), and N98 contribute to the NADP(+) site. Residues Y158 and K165 each act as proton acceptor in the active site. Residues K165 and 194 to 196 (IDS) each bind NADP(+).

It belongs to the short-chain dehydrogenases/reductases (SDR) family. As to quaternary structure, homodimer.

It carries out the reaction (4R,5R)-4,5-dihydroxycyclohex-2-ene-1-carbonyl-CoA + NADP(+) = (3R,4R)-3,4-dihydroxycyclohexa-1,5-diene-1-carbonyl-CoA + NADPH + H(+). The enzyme catalyses (3S)-3-hydroxycyclohexane-1-carbonyl-CoA + NADP(+) = (5S)-5-hydroxycyclohex-1-ene-1-carbonyl-CoA + NADPH + H(+). The catalysed reaction is cyclohexane-1-carbonyl-CoA + NADP(+) = cyclohex-1-ene-1-carbonyl-CoA + NADPH + H(+). Its pathway is antibiotic biosynthesis. Its activity is regulated as follows. Inhibited by the thiol inhibitors p-chloromercuribenzoate, N-ethylmaleimide and iodoacetamide. Also inhibited by various divalent cations. In terms of biological role, involved in the biosynthesis of the antifungal antibiotic ansatrienin A (mycotrienin I). Catalyzes three of the reductive steps involved in the formation of the cyclohexanecarboxylic acid (CHC) moiety of ansatrienin from shikimic acid. Can use 3,4-dihydroxycyclohexa-1,5-diene-1-carbonyl-CoA, 5-hydroxycyclohex-1-ene-1-carbonyl-CoA and cyclohex-1-ene-1-carbonyl-CoA as substrates. This Streptomyces collinus protein is 1-cyclohexenylcarbonyl-CoA reductase.